The primary structure comprises 933 residues: 2-oxoglutarate dehydrogenase E1 component (933 aa).

This sequence belongs to the alpha-ketoglutarate dehydrogenase family. As to quaternary structure, homodimer. Part of the 2-oxoglutarate dehydrogenase (OGDH) complex composed of E1 (2-oxoglutarate dehydrogenase), E2 (dihydrolipoamide succinyltransferase) and E3 (dihydrolipoamide dehydrogenase); the complex contains multiple copies of the three enzymatic components (E1, E2 and E3). The cofactor is thiamine diphosphate.

The catalysed reaction is N(6)-[(R)-lipoyl]-L-lysyl-[protein] + 2-oxoglutarate + H(+) = N(6)-[(R)-S(8)-succinyldihydrolipoyl]-L-lysyl-[protein] + CO2. Functionally, E1 component of the 2-oxoglutarate dehydrogenase (OGDH) complex which catalyzes the decarboxylation of 2-oxoglutarate, the first step in the conversion of 2-oxoglutarate to succinyl-CoA and CO(2). The sequence is that of 2-oxoglutarate dehydrogenase E1 component from Staphylococcus saprophyticus subsp. saprophyticus (strain ATCC 15305 / DSM 20229 / NCIMB 8711 / NCTC 7292 / S-41).